We begin with the raw amino-acid sequence, 833 residues long: cGMP-specific 3',5'-cyclic phosphodiesterase (833 aa).

A Phosphoserine modification is found at S60. A disordered region spans residues 82 to 101 (FLSDSGKKEQMPLTSPRFDS). 2 consecutive GAF domains span residues 122–272 (DVTA…GIVL) and 304–461 (SLEV…GLGI). The PDEase domain maps to 494–818 (ETRELQALAA…QKWQALADQQ (325 aa)). H571 functions as the Proton donor in the catalytic mechanism. Zn(2+)-binding residues include H575, H611, D612, and D722. Residue D612 coordinates Mg(2+). Q775 contacts 3',5'-cyclic GMP.

The protein belongs to the cyclic nucleotide phosphodiesterase family. Requires Zn(2+) as cofactor. Mg(2+) serves as cofactor. Post-translationally, phosphorylation is regulated by binding of cGMP to the two allosteric sites. Phosphorylation by PRKG1 leads to its activation.

The enzyme catalyses 3',5'-cyclic GMP + H2O = GMP + H(+). Its pathway is purine metabolism; 3',5'-cyclic GMP degradation; GMP from 3',5'-cyclic GMP: step 1/1. In terms of biological role, plays a role in signal transduction by regulating the intracellular concentration of cyclic nucleotides. This phosphodiesterase catalyzes the specific hydrolysis of cGMP to 5'-GMP. Specifically regulates nitric-oxide-generated cGMP. In Rattus norvegicus (Rat), this protein is cGMP-specific 3',5'-cyclic phosphodiesterase (Pde5a).